Consider the following 220-residue polypeptide: Deoxyribose-phosphate aldolase (220 aa).

Residue Asp92 is the Proton donor/acceptor of the active site. Lys157 acts as the Schiff-base intermediate with acetaldehyde in catalysis. Lys186 functions as the Proton donor/acceptor in the catalytic mechanism.

The protein belongs to the DeoC/FbaB aldolase family. DeoC type 1 subfamily.

The protein resides in the cytoplasm. The catalysed reaction is 2-deoxy-D-ribose 5-phosphate = D-glyceraldehyde 3-phosphate + acetaldehyde. It participates in carbohydrate degradation; 2-deoxy-D-ribose 1-phosphate degradation; D-glyceraldehyde 3-phosphate and acetaldehyde from 2-deoxy-alpha-D-ribose 1-phosphate: step 2/2. Catalyzes a reversible aldol reaction between acetaldehyde and D-glyceraldehyde 3-phosphate to generate 2-deoxy-D-ribose 5-phosphate. In Caldicellulosiruptor saccharolyticus (strain ATCC 43494 / DSM 8903 / Tp8T 6331), this protein is Deoxyribose-phosphate aldolase.